A 199-amino-acid polypeptide reads, in one-letter code: Large ribosomal subunit protein mL51 (199 aa).

The N-terminal 15 residues, 1–15, are a transit peptide targeting the mitochondrion; that stretch reads MNSNSLSRFTSIVRT.

It belongs to the mitochondrion-specific ribosomal protein mL51 family. In terms of assembly, component of the mitochondrial ribosome large subunit (39S) which comprises a 16S rRNA and about 50 distinct proteins.

Its subcellular location is the mitochondrion. This Caenorhabditis elegans protein is Large ribosomal subunit protein mL51 (mrpl-51).